The following is a 238-amino-acid chain: Survival of motor neuron-related-splicing factor 30 (238 aa).

Residues 72–132 (SWKVGDKCMA…KPVEEGRKAK (61 aa)) enclose the Tudor domain. The Nuclear localization signal signature appears at 142–160 (KKEMIAQQREYKKKKALKK). At Ser201 the chain carries Phosphoserine. Lys219 carries the post-translational modification N6-acetyllysine.

This sequence belongs to the SMN family. In terms of assembly, associates with spliceosomes. Associates with U4/U5/U6 tri-snRNP and with U2 snRNP.

The protein resides in the nucleus speckle. The protein localises to the nucleus. Its subcellular location is the cajal body. Functionally, involved in spliceosome assembly. This Rattus norvegicus (Rat) protein is Survival of motor neuron-related-splicing factor 30 (Smndc1).